The sequence spans 211 residues: Phosphoserine phosphatase (211 aa).

The Nucleophile role is filled by D11. 2 residues coordinate Mg(2+): D11 and D13. Residue D13 is the Proton donor of the active site. Residues E20, R56, 99-100, and K144 contribute to the substrate site; that span reads SG. Residue D167 coordinates Mg(2+). N170 lines the substrate pocket.

Belongs to the HAD-like hydrolase superfamily. SerB family. Requires Mg(2+) as cofactor.

The enzyme catalyses O-phospho-L-serine + H2O = L-serine + phosphate. The catalysed reaction is O-phospho-D-serine + H2O = D-serine + phosphate. It participates in amino-acid biosynthesis; L-serine biosynthesis; L-serine from 3-phospho-D-glycerate: step 3/3. The polypeptide is Phosphoserine phosphatase (Methanocaldococcus jannaschii (strain ATCC 43067 / DSM 2661 / JAL-1 / JCM 10045 / NBRC 100440) (Methanococcus jannaschii)).